Reading from the N-terminus, the 254-residue chain is Attacin-A (254 aa).

The signal sequence occupies residues M1–A18. Positions R19–R62 are excised as a propeptide.

This sequence belongs to the attacin/sarcotoxin-2 family.

The protein resides in the secreted. Its function is as follows. Hemolymph antibacterial protein. The polypeptide is Attacin-A (Trichoplusia ni (Cabbage looper)).